A 464-amino-acid polypeptide reads, in one-letter code: Na(+)/H(+) antiporter NhaA 2 (464 aa).

Transmembrane regions (helical) follow at residues 53–73 (VGGIILLVAAAAALIWANSPW), 96–116 (LTLGAWAADGLLAIFFLVVGL), 134–154 (ALPIAAAVGGMVVPALIFVLV), 165–185 (GWAIPTATDIAFAVAVLAVIS), 195–215 (FLLTLAVVDDLLAITVIAVFY), 219–239 (IKAWALALAVVPLALFTVCAQ), 257–277 (VLVHESGVHATVAGVLLGFAV), 313–333 (IAIPVFAFFAAGVSIGGLSGL), 340–360 (PITLGIVLGLVAGKPIGILVT), 378–398 (WVDVLGMSMLAGIGFTVSLLI), and 412–432 (FVKIGVLSGSLLAASLAAIVL).

This sequence belongs to the NhaA Na(+)/H(+) (TC 2.A.33) antiporter family.

The protein localises to the cell membrane. The enzyme catalyses Na(+)(in) + 2 H(+)(out) = Na(+)(out) + 2 H(+)(in). Functionally, na(+)/H(+) antiporter that extrudes sodium in exchange for external protons. The sequence is that of Na(+)/H(+) antiporter NhaA 2 from Mycolicibacterium vanbaalenii (strain DSM 7251 / JCM 13017 / BCRC 16820 / KCTC 9966 / NRRL B-24157 / PYR-1) (Mycobacterium vanbaalenii).